The sequence spans 450 residues: Glucose-6-phosphate isomerase (450 aa).

T39 is subject to Phosphothreonine. E291 functions as the Proton donor in the catalytic mechanism. Catalysis depends on residues H312 and K426.

The protein belongs to the GPI family.

The protein resides in the cytoplasm. It catalyses the reaction alpha-D-glucose 6-phosphate = beta-D-fructose 6-phosphate. It participates in carbohydrate biosynthesis; gluconeogenesis. The protein operates within carbohydrate degradation; glycolysis; D-glyceraldehyde 3-phosphate and glycerone phosphate from D-glucose: step 2/4. Functionally, catalyzes the reversible isomerization of glucose-6-phosphate to fructose-6-phosphate. This chain is Glucose-6-phosphate isomerase, found in Bacillus cereus (strain AH187).